The primary structure comprises 82 residues: Chaperone protein DnaJ 1 (82 aa).

Positions 1–33 are disordered; sequence YHLGGPPVTLKLPPGTPAGRTMRARGKGAVRKD.

This sequence belongs to the DnaJ family. In terms of assembly, homodimer. Zn(2+) is required as a cofactor.

It localises to the cytoplasm. Its function is as follows. Participates actively in the response to hyperosmotic and heat shock by preventing the aggregation of stress-denatured proteins and by disaggregating proteins, also in an autonomous, DnaK-independent fashion. Unfolded proteins bind initially to DnaJ; upon interaction with the DnaJ-bound protein, DnaK hydrolyzes its bound ATP, resulting in the formation of a stable complex. GrpE releases ADP from DnaK; ATP binding to DnaK triggers the release of the substrate protein, thus completing the reaction cycle. Several rounds of ATP-dependent interactions between DnaJ, DnaK and GrpE are required for fully efficient folding. Also involved, together with DnaK and GrpE, in the DNA replication of plasmids through activation of initiation proteins. The protein is Chaperone protein DnaJ 1 (dnaJ1) of Streptomyces albus G.